Reading from the N-terminus, the 90-residue chain is U7-theraphotoxin-Hhn1l (90 aa).

The signal sequence occupies residues 1 to 19; the sequence is MKTAIFTVVLALAVFAVLS. The propeptide occupies 20–50; sequence FGWEANEKALSEEFTELIHEKEAASETEARE. Intrachain disulfides connect C51–C65, C58–C70, and C64–C81.

This sequence belongs to the neurotoxin 10 (Hwtx-1) family. 13 (Hntx-13) subfamily. In terms of tissue distribution, expressed by the venom gland.

It is found in the secreted. Ion channel inhibitor. This is U7-theraphotoxin-Hhn1l from Cyriopagopus hainanus (Chinese bird spider).